The chain runs to 492 residues: MIARCIMVLGTSSGAGKSWLATALCRWFSDQGLRVAPFKAQNMSNNARVVAAPGGGQGEIGSAQYFQALAARTEPEVRMNPVLLKPEADTRSQVVLMGQVSEELTRMPWRGRSVHVWPHVAAALDALRAENDVVVIEGAGSPAEINLHANDIVNMRVARHAGAHGLLVTDIDRGGAFAHLYGTWALLPEDERALIQGFVLNKFRGDAALLAPAPDMLRERTGVPTVATIPMQWRHGLPEEDGVFDDAGHVRAGAGGAVHTTVAVVAYPRISNLDEFQPLKGVPGLRLVWARSPAEVAGADWIVLPGSKATAADLAWLRAQGLDAAIAAHAARGGRVLGICGGLQMLGEALIDTHGVDGNAPGLGLLPLVTAFDPAKTVRRTRTAFGALRGAWSALSGVAVQGYEIRHGRTAQHPAMAAAGDVAHPAIPGLAWQNARGNVLGLYLHGLFEDAVALRALFGADVPTLDAVFDRLARGVDEWFDPAWRAARRAGR.

Residues H259 to A453 form the GATase cobBQ-type domain. The active-site Nucleophile is the C340. The active site involves H445.

The protein belongs to the CobB/CobQ family. CobQ subfamily.

Its pathway is cofactor biosynthesis; adenosylcobalamin biosynthesis. Its function is as follows. Catalyzes amidations at positions B, D, E, and G on adenosylcobyrinic A,C-diamide. NH(2) groups are provided by glutamine, and one molecule of ATP is hydrogenolyzed for each amidation. This is Cobyric acid synthase from Paracidovorax citrulli (strain AAC00-1) (Acidovorax citrulli).